Here is a 758-residue protein sequence, read N- to C-terminus: MSHASRRRWRRATTSAATAALLCGALLTFPSAPAAAQVRLGSGSYTTVLPPGASGPSDHTGAPVAPKVTADFTQPVVTNDWWSSLIFQRYPGNPYGENLYAHPLSFKAQAHGLEVGYPDTPELVADGLKYQYTHSPDFVLGIHGLNAPAAKVAGYSDWTVTADLSDGTRQLRTTIGQGLPFVYADVSGGPIRVEFTAPPTVWRRSGNAVGVTVNGHHYALFAPSGTTWSESDTVFTADVGGSGYASVALLPSPDDFDRYAPYAYSFVTSTTLTYDYDPASATLTSTYRVTTEAREGTAQGTLLALYPHQWKETTTALTDLSYASPRGPMRVVEGDRFTTELTTHGILPSLPTVDSADHQRLRALIDAELHASDPWKGASDTYWTGKALGRLAQLVPIADSIGYTAGRDALLDLLKNKMEDWLTADGPGDNAQFYYDDQWDTLIGFPASFGSNTELNDHDFHYGYFITAAATIARYDRSWISEERWGPMVTTVLRDANNPDRDDERFPWLRSFSPYAGHGWASGHAGFASGNNQESSSEAMHFAASAALLGSLIGDEELRDLGVYLHTTQASAMRRYWQNADGDAFPAGYSHDVVGMVWSDGGDHRIWWDGTPEELYGINYLPITAGSLYLGHDPEHAAAMHQSLVTRLGRQPQVWRDIHWAHQALSDPDAALAAFEAQWQSYEPESGSSKAHTYQWLSTLAEFGTVDTSVTADTPHYAVFRDGDRRTYVAFNPTGQPLTVTFSDGTTLTVPPGQLATG.

The segment at residues 1–34 is a signal peptide (tat-type signal); that stretch reads MSHASRRRWRRATTSAATAALLCGALLTFPSAPA. A beta-sandwich subdomain region spans residues 38–251; it reads VRLGSGSYTT…SGYASVALLP (214 aa). A GH81 domain is found at 38 to 704; sequence VRLGSGSYTT…QWLSTLAEFG (667 aa). The tract at residues 252–342 is alpha/beta subdomain; it reads SPDDFDRYAP…EGDRFTTELT (91 aa). The interval 352–704 is (alpha/beta)6 barrel subdomain; sequence TVDSADHQRL…QWLSTLAEFG (353 aa). (1,3-beta-D-glucosyl)n contacts are provided by Y382, K386, D457, H461, N532, E534, and E538. D457 is an active-site residue. Residues E534 and E538 contribute to the active site.

This sequence belongs to the glycosyl hydrolase 81 family. Predicted to be exported by the Tat system. The position of the signal peptide cleavage has not been experimentally proven.

The protein localises to the secreted. The enzyme catalyses Hydrolysis of (1-&gt;3)-beta-D-glucosidic linkages in (1-&gt;3)-beta-D-glucans.. In terms of biological role, cleaves internal linkages in 1,3-beta-glucan. May contribute to biomass degradation by hydrolyzing the 1,3-beta-linked plant polymer callose that is present in decomposing plant tissue. The chain is Glucan endo-1,3-beta-D-glucosidase from Thermobifida fusca (strain YX).